The primary structure comprises 79 residues: Anti-insect Ac4 (79 aa).

The N-terminal stretch at 1-17 (MISLSLLLMIGVESVRD) is a signal peptide. The LCN-type CS-alpha/beta domain occupies 18-77 (GYIVDFKNCVYRCVPPCDGLCKKNGGKGGSCSFLIGSGLACWCNALPDNVPIKDPLHKCP). 4 disulfides stabilise this stretch: C26–C76, C30–C48, C34–C58, and C38–C60.

This sequence belongs to the long (4 C-C) scorpion toxin superfamily. Sodium channel inhibitor family. Alpha subfamily. In terms of tissue distribution, expressed by the venom gland.

It is found in the secreted. Its function is as follows. Alpha toxins bind voltage-independently at site-3 of sodium channels (Nav) and inhibit the inactivation of the activated channels, thereby blocking neuronal transmission. This protein is weakly toxic against insects (ED(50)&gt;2 ug per 100 mg of blowfly larvae), but is inactive against mammalian sodium channels (rNav1.2a, and rNav1.4). This Androctonus crassicauda (Arabian fat-tailed scorpion) protein is Anti-insect Ac4.